A 413-amino-acid chain; its full sequence is 4-hydroxy-3-methylbut-2-en-1-yl diphosphate synthase (flavodoxin) (413 aa).

Positions 298, 301, 344, and 351 each coordinate [4Fe-4S] cluster.

This sequence belongs to the IspG family. It depends on [4Fe-4S] cluster as a cofactor.

It carries out the reaction (2E)-4-hydroxy-3-methylbut-2-enyl diphosphate + oxidized [flavodoxin] + H2O + 2 H(+) = 2-C-methyl-D-erythritol 2,4-cyclic diphosphate + reduced [flavodoxin]. It participates in isoprenoid biosynthesis; isopentenyl diphosphate biosynthesis via DXP pathway; isopentenyl diphosphate from 1-deoxy-D-xylulose 5-phosphate: step 5/6. Functionally, converts 2C-methyl-D-erythritol 2,4-cyclodiphosphate (ME-2,4cPP) into 1-hydroxy-2-methyl-2-(E)-butenyl 4-diphosphate. The sequence is that of 4-hydroxy-3-methylbut-2-en-1-yl diphosphate synthase (flavodoxin) from Koribacter versatilis (strain Ellin345).